Consider the following 481-residue polypeptide: Zinc metalloproteinase/disintegrin (481 aa).

The first 20 residues, 1–20, serve as a signal peptide directing secretion; sequence MIQVLLVTICLAVFPYQGSS. The propeptide occupies 21–190; it reads IILESGNVDD…KASQLYLTPE (170 aa). In terms of domain architecture, Peptidase M12B spans 197–392; sequence RYIKLAIVVD…DNPQCILNAP (196 aa). Intrachain disulfides connect Cys308-Cys387, Cys349-Cys371, and Cys351-Cys354. His333 contributes to the Zn(2+) binding site. Residue Glu334 is part of the active site. Residues His337 and His343 each contribute to the Zn(2+) site. A propeptide spanning residues 393-408 is cleaved from the precursor; that stretch reads LRTDTVSTPVSGNEFL. The 82-residue stretch at 400–481 folds into the Disintegrin domain; that stretch reads TPVSGNEFLE…GDCPRNPFHA (82 aa). Intrachain disulfides connect Cys414–Cys429, Cys416–Cys424, Cys423–Cys446, Cys437–Cys443, Cys442–Cys467, and Cys455–Cys474. Positions 459-461 match the Cell attachment site motif; it reads RGD.

Belongs to the venom metalloproteinase (M12B) family. P-II subfamily. P-IIa sub-subfamily. Monomer. The cofactor is Zn(2+). In terms of tissue distribution, expressed by the venom gland.

Its subcellular location is the secreted. Impairs hemostasis in the envenomed animal. Its function is as follows. Disintegrin elegantin-2a-f: inhibits platelet aggregation induced by ADP, thrombin, platelet-activating factor and collagen. Acts by inhibiting fibrinogen interaction with platelet receptors GPIIb/GPIIIa (ITGA2B/ITGB3). The protein is Zinc metalloproteinase/disintegrin of Protobothrops elegans (Elegant pitviper).